Consider the following 380-residue polypeptide: Succinyl-diaminopimelate desuccinylase (380 aa).

H69 serves as a coordination point for Zn(2+). D71 is a catalytic residue. A Zn(2+)-binding site is contributed by D102. E135 serves as the catalytic Proton acceptor. 3 residues coordinate Zn(2+): E136, E164, and H353.

It belongs to the peptidase M20A family. DapE subfamily. In terms of assembly, homodimer. The cofactor is Zn(2+). Co(2+) is required as a cofactor.

It carries out the reaction N-succinyl-(2S,6S)-2,6-diaminopimelate + H2O = (2S,6S)-2,6-diaminopimelate + succinate. It functions in the pathway amino-acid biosynthesis; L-lysine biosynthesis via DAP pathway; LL-2,6-diaminopimelate from (S)-tetrahydrodipicolinate (succinylase route): step 3/3. Functionally, catalyzes the hydrolysis of N-succinyl-L,L-diaminopimelic acid (SDAP), forming succinate and LL-2,6-diaminopimelate (DAP), an intermediate involved in the bacterial biosynthesis of lysine and meso-diaminopimelic acid, an essential component of bacterial cell walls. The chain is Succinyl-diaminopimelate desuccinylase from Phenylobacterium zucineum (strain HLK1).